The chain runs to 170 residues: Putative pre-16S rRNA nuclease (170 aa).

The disordered stretch occupies residues 1-25; it reads MVPAQHRPPDRPGDPAHDPGRGRRL. Over residues 7–21 the composition is skewed to basic and acidic residues; it reads RPPDRPGDPAHDPGR.

It belongs to the YqgF nuclease family.

Its subcellular location is the cytoplasm. In terms of biological role, could be a nuclease involved in processing of the 5'-end of pre-16S rRNA. This Mycobacterium tuberculosis (strain ATCC 25177 / H37Ra) protein is Putative pre-16S rRNA nuclease.